The sequence spans 310 residues: tRNA dimethylallyltransferase (310 aa).

11 to 18 is a binding site for ATP; the sequence is GPTAVGKT. 13 to 18 lines the substrate pocket; that stretch reads TAVGKT. The tract at residues 36 to 39 is interaction with substrate tRNA; that stretch reads DSMQ.

The protein belongs to the IPP transferase family. Monomer. It depends on Mg(2+) as a cofactor.

The catalysed reaction is adenosine(37) in tRNA + dimethylallyl diphosphate = N(6)-dimethylallyladenosine(37) in tRNA + diphosphate. Its function is as follows. Catalyzes the transfer of a dimethylallyl group onto the adenine at position 37 in tRNAs that read codons beginning with uridine, leading to the formation of N6-(dimethylallyl)adenosine (i(6)A). The polypeptide is tRNA dimethylallyltransferase (Shouchella clausii (strain KSM-K16) (Alkalihalobacillus clausii)).